The following is a 447-amino-acid chain: Trigger factor (447 aa).

Residues 164-249 (GNQVTFDFEG…VKLVEKSKLP (86 aa)) enclose the PPIase FKBP-type domain.

The protein belongs to the FKBP-type PPIase family. Tig subfamily.

The protein resides in the cytoplasm. The enzyme catalyses [protein]-peptidylproline (omega=180) = [protein]-peptidylproline (omega=0). Functionally, involved in protein export. Acts as a chaperone by maintaining the newly synthesized protein in an open conformation. Functions as a peptidyl-prolyl cis-trans isomerase. This chain is Trigger factor, found in Psychrobacter cryohalolentis (strain ATCC BAA-1226 / DSM 17306 / VKM B-2378 / K5).